We begin with the raw amino-acid sequence, 450 residues long: Phosphoglucosamine mutase (450 aa).

Residue serine 101 is the Phosphoserine intermediate of the active site. Serine 101, aspartate 242, aspartate 244, and aspartate 246 together coordinate Mg(2+). Serine 101 carries the phosphoserine modification.

Belongs to the phosphohexose mutase family. The cofactor is Mg(2+). Activated by phosphorylation.

It carries out the reaction alpha-D-glucosamine 1-phosphate = D-glucosamine 6-phosphate. Functionally, catalyzes the conversion of glucosamine-6-phosphate to glucosamine-1-phosphate. The protein is Phosphoglucosamine mutase of Rhodopseudomonas palustris (strain HaA2).